Reading from the N-terminus, the 185-residue chain is Peptidyl-tRNA hydrolase (185 aa).

Tyr-14 is a tRNA binding site. The Proton acceptor role is filled by His-19. TRNA contacts are provided by Tyr-64, Asn-66, and Asn-112.

Belongs to the PTH family. Monomer.

The protein resides in the cytoplasm. The enzyme catalyses an N-acyl-L-alpha-aminoacyl-tRNA + H2O = an N-acyl-L-amino acid + a tRNA + H(+). Hydrolyzes ribosome-free peptidyl-tRNAs (with 1 or more amino acids incorporated), which drop off the ribosome during protein synthesis, or as a result of ribosome stalling. Its function is as follows. Catalyzes the release of premature peptidyl moieties from peptidyl-tRNA molecules trapped in stalled 50S ribosomal subunits, and thus maintains levels of free tRNAs and 50S ribosomes. This chain is Peptidyl-tRNA hydrolase, found in Shouchella clausii (strain KSM-K16) (Alkalihalobacillus clausii).